Here is an 840-residue protein sequence, read N- to C-terminus: Microcephalin (840 aa).

In terms of domain architecture, BRCT 1 spans 1 to 93 (MAAHILKDVV…AHIDESLFPA (93 aa)). The tract at residues 184-206 (KEKRENLSPSSSQMIQQSHDNPS) is disordered. The span at 190 to 206 (LSPSSSQMIQQSHDNPS) shows a compositional bias: polar residues. A phosphoserine mark is found at S279, S287, S296, and S333. 2 disordered regions span residues 313–379 (PDQK…SIRR) and 418–437 (PDNL…QLPS). T335 is modified (phosphothreonine). A compositionally biased stretch (basic residues) spans 355 to 378 (KRQRVSHGSHSPSKGKSKRKRSIR). The segment covering 427-437 (ENLPPTSQLPS) has biased composition (polar residues). S552 carries the post-translational modification Phosphoserine. The interval 562 to 586 (LKSTQNKGTTSKISNSSEGEAQSEH) is disordered. Residues 563–581 (KSTQNKGTTSKISNSSEGE) show a composition bias toward polar residues. BRCT domains follow at residues 644 to 734 (SGRG…PFEL) and 755 to 837 (YRGT…NYLL).

As to quaternary structure, interacts with CDC27 and maybe other components of the APC/C complex. Interacts with histone variant H2AX under DNA damage conditions.

Its subcellular location is the cytoplasm. The protein resides in the cytoskeleton. It is found in the microtubule organizing center. The protein localises to the centrosome. Its function is as follows. Implicated in chromosome condensation and DNA damage induced cellular responses. May play a role in neurogenesis and regulation of the size of the cerebral cortex. The polypeptide is Microcephalin (Hylobates lar (Lar gibbon)).